Reading from the N-terminus, the 99-residue chain is Integration host factor subunit alpha (99 aa).

The protein belongs to the bacterial histone-like protein family. In terms of assembly, heterodimer of an alpha and a beta chain.

Its function is as follows. This protein is one of the two subunits of integration host factor, a specific DNA-binding protein that functions in genetic recombination as well as in transcriptional and translational control. The chain is Integration host factor subunit alpha from Enterobacter sp. (strain 638).